Reading from the N-terminus, the 145-residue chain is Putative antiporter subunit mnhG2 (145 aa).

Transmembrane regions (helical) follow at residues 11-31 (IAAV…IGIV), 51-71 (VLLT…FFSV), and 72-92 (RLLL…HLVA).

Belongs to the CPA3 antiporters (TC 2.A.63) subunit G family. May form a heterooligomeric complex that consists of seven subunits: mnhA2, mnhB2, mnhC2, mnhD2, mnhE2, mnhF2 and mnhG2.

It is found in the cell membrane. This is Putative antiporter subunit mnhG2 (mnhG2) from Staphylococcus aureus (strain JH9).